We begin with the raw amino-acid sequence, 484 residues long: Bifunctional protein GlmU (484 aa).

Residues 1 to 240 form a pyrophosphorylase region; sequence MSNPHSSAVI…HRELAGVNDR (240 aa). Residues 12–15, lysine 26, glutamine 83, and 88–89 each bind UDP-N-acetyl-alpha-D-glucosamine; these read LAAG and GT. Aspartate 113 provides a ligand contact to Mg(2+). Residues glycine 150, glutamate 165, asparagine 180, and asparagine 238 each contribute to the UDP-N-acetyl-alpha-D-glucosamine site. Residue asparagine 238 participates in Mg(2+) binding. The segment at 241–261 is linker; the sequence is VQLAQAGKILNQRLVEDAMRN. The segment at 262 to 484 is N-acetyltransferase; that stretch reads GATIVDPDTT…QAHAHETKEG (223 aa). Residues arginine 343 and lysine 361 each contribute to the UDP-N-acetyl-alpha-D-glucosamine site. Histidine 373 functions as the Proton acceptor in the catalytic mechanism. The UDP-N-acetyl-alpha-D-glucosamine site is built by tyrosine 376 and asparagine 387. Acetyl-CoA contacts are provided by residues alanine 390, 396–397, serine 415, and alanine 433; that span reads NY. Positions 461 to 484 are disordered; that stretch reads EKNRPGTPAADAARQAHAHETKEG.

In the N-terminal section; belongs to the N-acetylglucosamine-1-phosphate uridyltransferase family. The protein in the C-terminal section; belongs to the transferase hexapeptide repeat family. In terms of assembly, homotrimer. The cofactor is Mg(2+).

It localises to the cytoplasm. It catalyses the reaction alpha-D-glucosamine 1-phosphate + acetyl-CoA = N-acetyl-alpha-D-glucosamine 1-phosphate + CoA + H(+). The enzyme catalyses N-acetyl-alpha-D-glucosamine 1-phosphate + UTP + H(+) = UDP-N-acetyl-alpha-D-glucosamine + diphosphate. It functions in the pathway nucleotide-sugar biosynthesis; UDP-N-acetyl-alpha-D-glucosamine biosynthesis; N-acetyl-alpha-D-glucosamine 1-phosphate from alpha-D-glucosamine 6-phosphate (route II): step 2/2. The protein operates within nucleotide-sugar biosynthesis; UDP-N-acetyl-alpha-D-glucosamine biosynthesis; UDP-N-acetyl-alpha-D-glucosamine from N-acetyl-alpha-D-glucosamine 1-phosphate: step 1/1. Its pathway is bacterial outer membrane biogenesis; LPS lipid A biosynthesis. In terms of biological role, catalyzes the last two sequential reactions in the de novo biosynthetic pathway for UDP-N-acetylglucosamine (UDP-GlcNAc). The C-terminal domain catalyzes the transfer of acetyl group from acetyl coenzyme A to glucosamine-1-phosphate (GlcN-1-P) to produce N-acetylglucosamine-1-phosphate (GlcNAc-1-P), which is converted into UDP-GlcNAc by the transfer of uridine 5-monophosphate (from uridine 5-triphosphate), a reaction catalyzed by the N-terminal domain. The polypeptide is Bifunctional protein GlmU (Corynebacterium diphtheriae (strain ATCC 700971 / NCTC 13129 / Biotype gravis)).